The following is a 149-amino-acid chain: Arginine repressor (149 aa).

It belongs to the ArgR family.

The protein resides in the cytoplasm. It participates in amino-acid biosynthesis; L-arginine biosynthesis [regulation]. Functionally, regulates arginine biosynthesis genes. The protein is Arginine repressor of Listeria innocua serovar 6a (strain ATCC BAA-680 / CLIP 11262).